Reading from the N-terminus, the 201-residue chain is FMN-dependent NADH:quinone oxidoreductase (201 aa).

FMN is bound by residues Ser-10, 16–18, 96–99, and 140–143; these read SQS, MYNF, and SRGG.

It belongs to the azoreductase type 1 family. Homodimer. The cofactor is FMN.

It catalyses the reaction 2 a quinone + NADH + H(+) = 2 a 1,4-benzosemiquinone + NAD(+). It carries out the reaction N,N-dimethyl-1,4-phenylenediamine + anthranilate + 2 NAD(+) = 2-(4-dimethylaminophenyl)diazenylbenzoate + 2 NADH + 2 H(+). Quinone reductase that provides resistance to thiol-specific stress caused by electrophilic quinones. Its function is as follows. Also exhibits azoreductase activity. Catalyzes the reductive cleavage of the azo bond in aromatic azo compounds to the corresponding amines. This Yersinia pseudotuberculosis serotype O:1b (strain IP 31758) protein is FMN-dependent NADH:quinone oxidoreductase.